A 147-amino-acid chain; its full sequence is UPF0208 membrane protein PM0703 (147 aa).

2 helical membrane-spanning segments follow: residues 32–52 (VIKA…FAIT) and 65–85 (LAIA…GLYW).

The protein belongs to the UPF0208 family.

It localises to the cell inner membrane. This Pasteurella multocida (strain Pm70) protein is UPF0208 membrane protein PM0703.